The chain runs to 248 residues: Amphiregulin (248 aa).

The N-terminal stretch at 1–26 is a signal peptide; the sequence is MRTPLLPLARSVLLLLVLGSGHYAAA. Residues 27–99 constitute a propeptide that is removed on maturation; sequence LELNDPSSGK…IIDDSVRVEQ (73 aa). Disordered regions lie at residues 29–48, 57–77, and 100–136; these read LNDP…SAGG, VSTI…YDYS, and VIKP…KKKK. Residues 58–70 are compositionally biased toward polar residues; sequence STISEMPSGSELS. Positions 100–116 are enriched in basic and acidic residues; the sequence is VIKPKKNKTEGEKSTEK. N106 carries N-linked (GlcNAc...) asparagine glycosylation. The segment covering 117–136 has biased composition (basic residues); it reads PKRKKKGGKNGKGRRNKKKK. The region spanning 135–175 is the EGF-like domain; sequence KKNPCTAKFQNFCIHGECRYIENLEVVTCNCHQDYFGERCG. Intrachain disulfides connect C139/C152, C147/C163, and C165/C174. A helical membrane pass occupies residues 192 to 215; that stretch reads IAVVAVTIFVSAIILAAIGIGIVI. A glycan (N-linked (GlcNAc...) asparagine) is linked at N241.

It belongs to the amphiregulin family. In terms of assembly, the immature precursor interacts with CNIH.

It localises to the membrane. Its function is as follows. Ligand of the EGF receptor/EGFR. Autocrine growth factor as well as a mitogen for a broad range of target cells including astrocytes, Schwann cells and fibroblasts. This is Amphiregulin (Areg) from Mus musculus (Mouse).